The chain runs to 1579 residues: Pentafunctional AROM polypeptide (1579 aa).

The tract at residues 1–391 (MKVELSKVPI…YGTSAHVVSD (391 aa)) is 3-dehydroquinate synthase. Residues 44–46 (DTN), 79–82 (EAHK), 110–112 (GGV), and D115 contribute to the NAD(+) site. Position 126 (R126) interacts with 7-phospho-2-dehydro-3-deoxy-D-arabino-heptonate. 135-136 (TS) lines the NAD(+) pocket. 7-phospho-2-dehydro-3-deoxy-D-arabino-heptonate is bound by residues D142 and K148. K157 provides a ligand contact to NAD(+). Residue N158 participates in 7-phospho-2-dehydro-3-deoxy-D-arabino-heptonate binding. NAD(+) is bound by residues 175–178 (WLET) and N186. E190 provides a ligand contact to Zn(2+). Residues 190–193 (EVIK) and K257 each bind 7-phospho-2-dehydro-3-deoxy-D-arabino-heptonate. The Proton acceptor; for 3-dehydroquinate synthase activity role is filled by E267. 7-phospho-2-dehydro-3-deoxy-D-arabino-heptonate contacts are provided by residues 271 to 275 (RNLLN) and H278. H278 contributes to the Zn(2+) binding site. H282 serves as the catalytic Proton acceptor; for 3-dehydroquinate synthase activity. 7-phospho-2-dehydro-3-deoxy-D-arabino-heptonate contacts are provided by H294 and K363. H294 contacts Zn(2+). The EPSP synthase stretch occupies residues 404–862 (VYPFKTLENG…WDVLHTQLGA (459 aa)). Residue C844 is the For EPSP synthase activity of the active site. Residues 881–1070 (SIVIIGMRAA…IPTNRSSFVC (190 aa)) form a shikimate kinase region. 886 to 893 (GMRAAGKT) is an ATP binding site. The tract at residues 1071–1283 (LTFDDLAAHK…SAPGQLTLSQ (213 aa)) is 3-dehydroquinase. The active-site Proton acceptor; for 3-dehydroquinate dehydratase activity is H1188. K1217 serves as the catalytic Schiff-base intermediate with substrate; for 3-dehydroquinate dehydratase activity. The tract at residues 1296–1579 (AKNFYVVGSP…IYSAVTEEQA (284 aa)) is shikimate dehydrogenase.

It in the N-terminal section; belongs to the sugar phosphate cyclases superfamily. Dehydroquinate synthase family. In the 2nd section; belongs to the EPSP synthase family. This sequence in the 3rd section; belongs to the shikimate kinase family. The protein in the 4th section; belongs to the type-I 3-dehydroquinase family. It in the C-terminal section; belongs to the shikimate dehydrogenase family. As to quaternary structure, homodimer. The cofactor is Zn(2+).

Its subcellular location is the cytoplasm. It carries out the reaction 7-phospho-2-dehydro-3-deoxy-D-arabino-heptonate = 3-dehydroquinate + phosphate. The enzyme catalyses 3-dehydroquinate = 3-dehydroshikimate + H2O. It catalyses the reaction shikimate + NADP(+) = 3-dehydroshikimate + NADPH + H(+). The catalysed reaction is shikimate + ATP = 3-phosphoshikimate + ADP + H(+). It carries out the reaction 3-phosphoshikimate + phosphoenolpyruvate = 5-O-(1-carboxyvinyl)-3-phosphoshikimate + phosphate. The protein operates within metabolic intermediate biosynthesis; chorismate biosynthesis; chorismate from D-erythrose 4-phosphate and phosphoenolpyruvate: step 2/7. Its pathway is metabolic intermediate biosynthesis; chorismate biosynthesis; chorismate from D-erythrose 4-phosphate and phosphoenolpyruvate: step 3/7. It functions in the pathway metabolic intermediate biosynthesis; chorismate biosynthesis; chorismate from D-erythrose 4-phosphate and phosphoenolpyruvate: step 4/7. It participates in metabolic intermediate biosynthesis; chorismate biosynthesis; chorismate from D-erythrose 4-phosphate and phosphoenolpyruvate: step 5/7. The protein operates within metabolic intermediate biosynthesis; chorismate biosynthesis; chorismate from D-erythrose 4-phosphate and phosphoenolpyruvate: step 6/7. Its function is as follows. The AROM polypeptide catalyzes 5 consecutive enzymatic reactions in prechorismate polyaromatic amino acid biosynthesis. The chain is Pentafunctional AROM polypeptide from Lachancea thermotolerans (strain ATCC 56472 / CBS 6340 / NRRL Y-8284) (Yeast).